The sequence spans 504 residues: Maturase K (504 aa).

The protein belongs to the intron maturase 2 family. MatK subfamily.

Its subcellular location is the plastid. The protein localises to the chloroplast. In terms of biological role, usually encoded in the trnK tRNA gene intron. Probably assists in splicing its own and other chloroplast group II introns. The polypeptide is Maturase K (Quercus gemelliflora (Pasang hiris)).